A 130-amino-acid polypeptide reads, in one-letter code: Small ribosomal subunit protein uS9 (130 aa).

Belongs to the universal ribosomal protein uS9 family.

In Bacillus velezensis (strain DSM 23117 / BGSC 10A6 / LMG 26770 / FZB42) (Bacillus amyloliquefaciens subsp. plantarum), this protein is Small ribosomal subunit protein uS9.